The chain runs to 500 residues: MFKQFLSKLPRKSSKSDSGELNRSSSGPVSSPVQRSGTSGGGSGPVRSNSGKRMSSAVFPASVVAGIEPLVPFKDVPSSEKLNLFVSKVSLCCVTFDFSDPGKNSIEKDVKRQTLLELLDFVASGSVKFTEPAILAMCRMCAVNLFRVFPPNYRSSSGGENDDDEPMFDPAWPHLQIVYDLLLKFITSPCLDAKVAKKYLDHAFIVRLLDLFDSEDPRERECLKTILHRVYGKFMVHRPFVRKSMSNIFYRFVFETEKHSGIAELLEIFGSIVSGFALPLKEEHKIFLWRVLIPLHKPKSVGNYFQQLSYCITQFIDKEPKLGSVVIKGLLKFWPITNSQKEVMFLGEVEEIVEAMSVMEFQKIMVPLFLRIACCVTSSHFQVSERALFLWNNDQIVNLIGHNRQAILPIMFTALEKNAQNHWNQSVLNLTLNVRKMFCEMDEALFMSCHARFKEDEAKQCSAAEKRKEVWARLENAASMKPITGKTAVLVTPRATSIAC.

The interval 1-53 (MFKQFLSKLPRKSSKSDSGELNRSSSGPVSSPVQRSGTSGGGSGPVRSNSGKR) is disordered. The segment covering 21–37 (LNRSSSGPVSSPVQRSG) has biased composition (polar residues).

This sequence belongs to the phosphatase 2A regulatory subunit B56 family. In terms of assembly, PP2A consists of a common heteromeric enzyme, composed of a catalytic subunit (subunits C), a constant regulatory subunit (subunit A), and a variety of regulatory subunits such as subunits B (the R2/B/PR55/B55, R3/B''/PR72/PR130/PR59 and R5/B'/B56 families).

It is found in the cytoplasm. Its function is as follows. The B regulatory subunit may modulate substrate selectivity and catalytic activity, and may also direct the localization of the catalytic enzyme to a particular subcellular compartment. The protein is Serine/threonine protein phosphatase 2A 57 kDa regulatory subunit B' kappa isoform (B'KAPPA) of Arabidopsis thaliana (Mouse-ear cress).